Reading from the N-terminus, the 293-residue chain is Group 3 late-embryogenesis abundant protein, mitochondrial (293 aa).

The N-terminal 31 residues, 1–31 (MFLARNAGRAGYRGVVAYQQAASFSVSSAKA), are a transit peptide targeting the mitochondrion. The segment covering 27–43 (SSAKAAGSRSSGGSDAG) has biased composition (low complexity). The tract at residues 27 to 52 (SSAKAAGSRSSGGSDAGDYAREAAEH) is disordered. LEA 11-mer repeat repeat units follow at residues 58–68 (KDLKNEASWKA), 83–93 (KDTVKEGVHDM), 123–133 (KNAAQDTAATL), 134–144 (KDKAGSAWNQA), 145–155 (KHVVEDKGEDV), 160–170 (KDTASKVWGKA), 171–181 (KHVAEDVKENA), 199–209 (KDKAADVLSGA), and 210–220 (KHTAENLAHKA). The interval 217 to 293 (AHKAQAAIHD…KGPGQAGGRR (77 aa)) is disordered. Positions 230 to 265 (SSGSQSQSQSQSQYRQGQQQGRQDQQQSKSQWGQTS) are enriched in low complexity. The segment covering 279 to 293 (GPQGGKGPGQAGGRR) has biased composition (gly residues).

Belongs to the LEA type 4 family.

It is found in the mitochondrion. In terms of biological role, mitochondrial heat soluble protein acting as a molecular shield in water-deficient condition. This is Group 3 late-embryogenesis abundant protein, mitochondrial from Ramazzottius varieornatus (Water bear).